The sequence spans 128 residues: Early E3 14.5 kDa protein (128 aa).

The protein belongs to the adenoviridae E3_15 family.

In terms of biological role, protects virus-infected cells from TNF-induced cytolysis. The chain is Early E3 14.5 kDa protein from Human adenovirus C serotype 5 (HAdV-5).